Consider the following 109-residue polypeptide: Red pigment-concentrating prohormone (109 aa).

The N-terminal stretch at 1-25 (MVRRSGVTLLVVALLVVTLMSSVSA) is a signal peptide. Gln-26 carries the pyrrolidone carboxylic acid modification. Trp-33 carries the post-translational modification Tryptophan amide. The disordered stretch occupies residues 34–78 (GKRAAGASGSNGGVGEAVSGLHPSVGGAPGGVVPPGSSSPGDSCG). Composition is skewed to low complexity over residues 49–59 (EAVSGLHPSVG) and 67–78 (PPGSSSPGDSCG).

This sequence belongs to the AKH/HRTH/RPCH family.

The protein localises to the secreted. This hormone adapts the animal to light backgrounds by stimulating concentration of the pigment of its red body-chromatophores. The protein is Red pigment-concentrating prohormone of Callinectes sapidus (Blue crab).